A 321-amino-acid chain; its full sequence is N-acetyllactosaminide alpha-1,3-galactosyltransferase-like 1 (321 aa).

Topologically, residues Met1–Glu6 are cytoplasmic. The helical; Signal-anchor for type II membrane protein transmembrane segment at Thr7–Ser24 threads the bilayer. Residues Arg25–Thr321 lie on the Lumenal side of the membrane. 2 N-linked (GlcNAc...) asparagine glycosylation sites follow: Asn87 and Asn99. Substrate-binding positions include Phe95–Phe100, Thr187–Asn189, and His209–Trp212. Catalysis depends on Glu277, which acts as the Nucleophile.

It belongs to the glycosyltransferase 6 family. Requires Mn(2+) as cofactor.

It is found in the golgi apparatus. It localises to the golgi stack membrane. The catalysed reaction is a beta-D-galactosyl-(1-&gt;4)-N-acetyl-beta-D-glucosaminyl derivative + UDP-alpha-D-galactose = an alpha-D-galactosyl-(1-&gt;3)-beta-D-galactosyl-(1-&gt;4)-N-acetyl-beta-D-glucosaminyl derivative + UDP + H(+). It participates in protein modification; protein glycosylation. Synthesizes the galactose-alpha(1,3)-galactose group by catalyzing the transfer of a galactose residue, with an alpha-1,3 linkage, on terminal lactosaminide (Gal-beta-1,4-GlcNAc-R) disaccharide borne by a glycoprotein or a glycolipid. In Rattus norvegicus (Rat), this protein is N-acetyllactosaminide alpha-1,3-galactosyltransferase-like 1 (Ggta1l1).